The chain runs to 124 residues: Large ribosomal subunit protein bL12 (124 aa).

The protein belongs to the bacterial ribosomal protein bL12 family. In terms of assembly, homodimer. Part of the ribosomal stalk of the 50S ribosomal subunit. Forms a multimeric L10(L12)X complex, where L10 forms an elongated spine to which 2 to 4 L12 dimers bind in a sequential fashion. Binds GTP-bound translation factors.

In terms of biological role, forms part of the ribosomal stalk which helps the ribosome interact with GTP-bound translation factors. Is thus essential for accurate translation. This chain is Large ribosomal subunit protein bL12, found in Cupriavidus necator (strain ATCC 17699 / DSM 428 / KCTC 22496 / NCIMB 10442 / H16 / Stanier 337) (Ralstonia eutropha).